The following is a 446-amino-acid chain: Choline monooxygenase, chloroplastic (446 aa).

The transit peptide at 1–65 (MAASATTMLL…NTSTNKIITK (65 aa)) directs the protein to the chloroplast. A Rieske domain is found at 127–234 (WQVAGYSEQV…VAEWGPFILI (108 aa)). 4 residues coordinate [2Fe-2S] cluster: Cys169, His171, Cys188, and His191. Fe cation contacts are provided by His294 and His299.

Belongs to the choline monooxygenase family. [2Fe-2S] cluster is required as a cofactor. Requires Fe cation as cofactor. The cofactor is Mg(2+). As to expression, expressed in roots and leaves.

The protein localises to the plastid. It is found in the chloroplast stroma. The catalysed reaction is choline + 2 reduced [2Fe-2S]-[ferredoxin] + O2 + 2 H(+) = betaine aldehyde hydrate + 2 oxidized [2Fe-2S]-[ferredoxin] + H2O. The protein operates within amine and polyamine biosynthesis; betaine biosynthesis via choline pathway; betaine aldehyde from choline (monooxygenase route): step 1/1. Catalyzes the first step of the osmoprotectant glycine betaine synthesis. This Beta vulgaris (Sugar beet) protein is Choline monooxygenase, chloroplastic (CMO).